Consider the following 430-residue polypeptide: UDP-N-acetylmuramoylalanine--D-glutamate ligase (430 aa).

109–115 contributes to the ATP binding site; that stretch reads GTDGKST.

The protein belongs to the MurCDEF family.

It is found in the cytoplasm. The enzyme catalyses UDP-N-acetyl-alpha-D-muramoyl-L-alanine + D-glutamate + ATP = UDP-N-acetyl-alpha-D-muramoyl-L-alanyl-D-glutamate + ADP + phosphate + H(+). It functions in the pathway cell wall biogenesis; peptidoglycan biosynthesis. Its function is as follows. Cell wall formation. Catalyzes the addition of glutamate to the nucleotide precursor UDP-N-acetylmuramoyl-L-alanine (UMA). The polypeptide is UDP-N-acetylmuramoylalanine--D-glutamate ligase (Thermotoga maritima (strain ATCC 43589 / DSM 3109 / JCM 10099 / NBRC 100826 / MSB8)).